Here is a 245-residue protein sequence, read N- to C-terminus: Large ribosomal subunit protein uL3 (245 aa).

Q151 carries the N5-methylglutamine modification. The interval K214–A245 is disordered. The segment covering A225–A245 has biased composition (low complexity).

This sequence belongs to the universal ribosomal protein uL3 family. Part of the 50S ribosomal subunit. Forms a cluster with proteins L14 and L19. Post-translationally, methylated by PrmB.

Its function is as follows. One of the primary rRNA binding proteins, it binds directly near the 3'-end of the 23S rRNA, where it nucleates assembly of the 50S subunit. The sequence is that of Large ribosomal subunit protein uL3 from Methylocella silvestris (strain DSM 15510 / CIP 108128 / LMG 27833 / NCIMB 13906 / BL2).